A 435-amino-acid polypeptide reads, in one-letter code: UDP-N-acetylmuramoylalanine--D-glutamate ligase (435 aa).

114-120 contacts ATP; it reads GSNGKST.

This sequence belongs to the MurCDEF family.

The protein localises to the cytoplasm. The catalysed reaction is UDP-N-acetyl-alpha-D-muramoyl-L-alanine + D-glutamate + ATP = UDP-N-acetyl-alpha-D-muramoyl-L-alanyl-D-glutamate + ADP + phosphate + H(+). It functions in the pathway cell wall biogenesis; peptidoglycan biosynthesis. Its function is as follows. Cell wall formation. Catalyzes the addition of glutamate to the nucleotide precursor UDP-N-acetylmuramoyl-L-alanine (UMA). This chain is UDP-N-acetylmuramoylalanine--D-glutamate ligase, found in Haemophilus ducreyi (strain 35000HP / ATCC 700724).